The primary structure comprises 179 residues: Alpha-S2-casein-like A (179 aa).

The first 15 residues, 1–15 (MKFFIFTCLVAAALA), serve as a signal peptide directing secretion. Residues S24 and S25 each carry the phosphoserine modification. Positions 44-121 (FQTPQDSASS…NAIYDVPSQE (78 aa)) are disordered. The span at 63-74 (ISEKIEQSEEQK) shows a compositional bias: basic and acidic residues. Residues 93–110 (PQICTPYQQQSSVNQRPQ) show a composition bias toward polar residues.

This sequence belongs to the alpha-casein family. As to expression, mammary gland specific. Secreted in milk.

It localises to the secreted. Functionally, important role in the capacity of milk to transport calcium phosphate. In Rattus norvegicus (Rat), this protein is Alpha-S2-casein-like A (Csn1s2a).